The chain runs to 533 residues: MAQVVHIKEQKYDRQLRLWGDHGQEALESAHVCLINATATGTEILKNLVLPGIGLFTIVDGNVVAGEDVGNNFFLQKESIGKNRAQTSMELLQELNDDVTGNFVPESPEQLLDKDPSFFCKFTMVISTQLPESTLLRLAETLWDSNIPLLVCRAYGFVGYMRIIVKEHTVIESHPDNALEDLRLDQPFPELREHLQSYDLDHMERKDHSHTPWIIVVAKYLDKWRSENGGQMPKSYKEKESFRDLIRQGILKNENGVPEDEENFEEAIKNVNTALNITKVSSSVEEILNDDRCTNLTHQSTSFWILARAVKEFMAMEGKGNLPLRGTIPDMIADSDKFIKLQNIYREKAKKDASAVESCVSKLLQSVGRPPESISERDIRLFCRNCAFLRVVRCRSLEEEYGLDTAKKDDIVSLMENPDNEIVLYLMLRAVDRFQKQLGRYPGIYNYQIESDIGKLKSCLNGLLQEYGLSLTVKDEYIQEFCRYGAAEPHTIASFLGGAAAQEAIKIITKQFVIFNNTFIYNAMLQTSATFQL.

The interval 330-343 (DMIADSDKFIKLQN) is interaction with uba3.

It belongs to the ubiquitin-activating E1 family. ULA1 subfamily. As to quaternary structure, heterodimer of uba3 and nae1. The complex binds nedd8 and ube2m.

It participates in protein modification; protein neddylation. Functionally, regulatory subunit of the dimeric uba3-nae1 E1 enzyme. E1 activates nedd8 by first adenylating its C-terminal glycine residue with ATP, thereafter linking this residue to the side chain of the catalytic cysteine, yielding a nedd8-uba3 thioester and free AMP. E1 finally transfers nedd8 to the catalytic cysteine of ube2m. The covalent attachment of nedd8 to target proteins is known as 'neddylation' and the process is involved in the regulation of cell growth, viability and development. This is NEDD8-activating enzyme E1 regulatory subunit (nae1) from Xenopus laevis (African clawed frog).